Here is a 278-residue protein sequence, read N- to C-terminus: Ribosomal RNA small subunit methyltransferase J (278 aa).

Residues 143–144 (ER) and aspartate 197 contribute to the S-adenosyl-L-methionine site.

The protein belongs to the methyltransferase superfamily. RsmJ family.

The protein localises to the cytoplasm. The catalysed reaction is guanosine(1516) in 16S rRNA + S-adenosyl-L-methionine = N(2)-methylguanosine(1516) in 16S rRNA + S-adenosyl-L-homocysteine + H(+). In terms of biological role, specifically methylates the guanosine in position 1516 of 16S rRNA. This Marinobacter nauticus (strain ATCC 700491 / DSM 11845 / VT8) (Marinobacter aquaeolei) protein is Ribosomal RNA small subunit methyltransferase J.